The following is a 140-amino-acid chain: Mitochondrial import receptor subunit TOM22 homolog (140 aa).

Positions 1–11 are enriched in low complexity; it reads MAAAAAGPGAP. The disordered stretch occupies residues 1-40; that stretch reads MAAAAAGPGAPLSADELLPKGDAEKPEEELEEEDDEELDE. At 1–81 the chain is on the cytoplasmic side; that stretch reads MAAAAAGPGA…AQKMYRFSRA (81 aa). Residue S13 is modified to Phosphoserine. A compositionally biased stretch (acidic residues) spans 25–40; that stretch reads KPEEELEEEDDEELDE. An import sequence; necessary for mitochondrion outer membrane localization and integration in the TOM complex region spans residues 39-48; that stretch reads DETLSERLWG. At T41 the chain carries Phosphothreonine. S43 carries the phosphoserine modification. The tract at residues 81–101 is TMD; necessary for mitochondrion outer membrane localization and integration in the TOM complex; it reads AALWIGTTSFMILVLPVVFET. The helical transmembrane segment at 82 to 101 threads the bilayer; the sequence is ALWIGTTSFMILVLPVVFET. Over 102–140 the chain is Mitochondrial intermembrane; sequence EKLQMEQQQQLQQRQILLGPNTGLSGGMPGALPSLPGKI. The segment at 121–140 is C-tail signal; necessary for mitochondrion outer membrane localization and integration in the TOM complex; that stretch reads PNTGLSGGMPGALPSLPGKI.

This sequence belongs to the Tom22 family. Forms part of the preprotein translocase complex of the outer mitochondrial membrane (TOM complex) which consists of at least 7 different proteins (TOMM5, TOMM6, TOMM7, TOMM20, TOMM22, TOMM40 and TOMM70). Interacts with PPP2R2B and TOMM40.

The protein resides in the mitochondrion outer membrane. Central receptor component of the translocase of the outer membrane of mitochondria (TOM complex) responsible for the recognition and translocation of cytosolically synthesized mitochondrial preproteins. Together with the peripheral receptor TOM20 functions as the transit peptide receptor and facilitates the movement of preproteins into the translocation pore. Required for the translocation across the mitochondrial outer membrane of cytochrome P450 monooxygenases. The chain is Mitochondrial import receptor subunit TOM22 homolog (TOMM22) from Bos taurus (Bovine).